Reading from the N-terminus, the 37-residue chain is Cytochrome b6-f complex subunit 5 (37 aa).

A helical transmembrane segment spans residues 5-25 (ILLGIVLGMVLVTLAGLFVAA).

It belongs to the PetG family. As to quaternary structure, the 4 large subunits of the cytochrome b6-f complex are cytochrome b6, subunit IV (17 kDa polypeptide, PetD), cytochrome f and the Rieske protein, while the 4 small subunits are PetG, PetL, PetM and PetN. The complex functions as a dimer.

Its subcellular location is the cellular thylakoid membrane. In terms of biological role, component of the cytochrome b6-f complex, which mediates electron transfer between photosystem II (PSII) and photosystem I (PSI), cyclic electron flow around PSI, and state transitions. PetG is required for either the stability or assembly of the cytochrome b6-f complex. In Synechococcus sp. (strain JA-3-3Ab) (Cyanobacteria bacterium Yellowstone A-Prime), this protein is Cytochrome b6-f complex subunit 5.